The following is a 117-amino-acid chain: G antigen 12H (117 aa).

Residues 1-117 (MSWRGRSTYY…PEEGEKQSQC (117 aa)) form a disordered region. Acidic residues-rich tracts occupy residues 32–45 (FSDEVEPATPEEGE) and 87–96 (ECEDGPDGQE). The span at 103-117 (EEVKTPEEGEKQSQC) shows a compositional bias: basic and acidic residues.

The protein belongs to the GAGE family.

This is G antigen 12H (GAGE12H) from Homo sapiens (Human).